The chain runs to 143 residues: Transcriptional regulator MraZ (143 aa).

SpoVT-AbrB domains follow at residues 5-47 and 76-119; these read EYQH…PQDE and AAEL…STEK.

This sequence belongs to the MraZ family. As to quaternary structure, forms oligomers.

The protein localises to the cytoplasm. It is found in the nucleoid. In Syntrophomonas wolfei subsp. wolfei (strain DSM 2245B / Goettingen), this protein is Transcriptional regulator MraZ.